The sequence spans 313 residues: Dehydrodolichyl diphosphate synthase CPT5, chloroplastic (313 aa).

The N-terminal 42 residues, M1 to A42, are a transit peptide targeting the chloroplast. Residue D89 is part of the active site.

Belongs to the UPP synthase family. The cofactor is Mg(2+). Expressed in leaf trichomes, stem trichomes and old leaves. Expressed at low levels in young leaves and flowers.

It localises to the plastid. It is found in the chloroplast. It carries out the reaction n isopentenyl diphosphate + (2E,6E)-farnesyl diphosphate = a di-trans,poly-cis-polyprenyl diphosphate + n diphosphate. Its function is as follows. Catalyzes cis-prenyl chain elongation to produce the polyprenyl backbone of dolichol, a glycosyl carrier-lipid required for the biosynthesis of several classes of glycoprotein. The protein is Dehydrodolichyl diphosphate synthase CPT5, chloroplastic of Solanum lycopersicum (Tomato).